The primary structure comprises 685 residues: Protein argonaute (685 aa).

Residues 1–99 (MNHLGKTEVF…LYPKGRRPLD (99 aa)) form an N-terminal domain region. The tract at residues 100 to 176 (PKDPGERSVL…VDPAYRILCE (77 aa)) is linker L1. Positions 169-265 (PAYRILCEMS…HLTGLLVPVL (97 aa)) constitute a PAZ domain. Residues 272 to 337 (EEEGSLALSL…SKPADALRVG (66 aa)) form a linker L2 region. A mid domain region spans residues 338 to 463 (FYRAQETALA…LLAKAGLQVV (126 aa)). Residues 464–685 (ALSGAYPAEL…EVDREKLFFV (222 aa)) form a PIWI domain region. Active-site residues include aspartate 478, glutamate 512, aspartate 546, and aspartate 660. Residue aspartate 478 participates in Mn(2+) binding. One can recognise a Piwi domain in the interval 507-671 (EAQAGERIPQ…LVKEVGRLGI (165 aa)). Mn(2+) is bound by residues aspartate 546, aspartate 660, and valine 685.

It belongs to the argonaute family. Long pAgo subfamily. In terms of assembly, coimmunoprecipitates with a number of proteins involved in DNA replication or recombination including RepA (initiates replication), AddA/B (TT_C0638 and TT_C0639), ArgR, GyrA/B, HU (TT_C0984), PriA, Rad52 (TT_C1923), RecJ, SSB, TopA and UvrB. Most proteins remain associated with TtAgo after DNase treatment and associate with catalytically inactive protein. Mn(2+) serves as cofactor.

A DNA-guided ssDNA endonuclease. Uses short ssDNA sequences as guides (gDNA, also called small interfering DNA, siDNA) to bind complementary DNA target strands, resulting in cleavage of the target DNA (tDNA). The cleavage site is 10 nucleotides (nt) downstream of the target residue base-paired with the 5'-end of the gDNA. Plays a role in completion of DNA replication, participates in decatenating replicated DNA and plasmid. In situ purifies with 5'-phosphorylated long DNA (about 1160 nt, maps to the whole chromosome and plasmid), 25-35 nt RNAs that map to the whole chromosome and 15-18 nt DNA that maps to the replication terminus region (ter) on the chromosome and plasmid. Most short DNA starts with dC. Has been shown to have guide sequence-independent dsDNase activity called 'chopping', which requires unstable DNA (high AT-content, multiple mismatches or low salt conditions), and could be used to generate gDNA. Preferentially binds tDNA with dC at its 3'-terminus. Has also been shown to have no detectable guide sequence-independent dsDNase activity. The latter study proposes TtAgo may acquire gDNA from nicked dsDNA, by binding to 5'-phosphorylated-dC nicks, then cleaving 10 nt away on the opposite strand; subsequently an exonuclease (maybe AddA-AddB helicase/nuclease) trims the ends to generate the gDNA. Its function is as follows. Involved in defense against invading mobile genetic elements. TtAgo interferes with plasmid DNA, stimulates expression of specific endogenous genes, including various CRISPR loci and at least part of the CRISPR adaptation machinery, but only when exogenous plasmid DNA is present. Upon purification from E.coli associates with gDNA 13-25 nt long with 5'-phosphorylated ends and with 10-150 nt RNA with 5'-OH. DNA corresponds to the expression plasmid rather than chromosomal DNA; 89% of gDNA starts with dC and 72% has dA in the second position. Endonucleolytically cleaves tDNA with 5'-phosphorylated gDNA but not 5'-phosphorylated gRNA; the active site is involved in processing or binding of ssDNA. Nicks or linearizes supercoiled plasmid target when it has the appropriate gDNA sequences, does not cleave linear tDNA. Positions 4 to 16 of the tDNA need to be base paired to the gDNA for efficient tDNA cleavage. Although the system can support single nucleotide insertions in either the gDNA or tDNA, in all cases cleavage activity is reduced, with a wide range of sequence- and position-specific effects. Functionally, first characterized as a DNA-guided RNA endonuclease. Uses gDNA to bind complementary RNA target strands, resulting in cleavage of the target RNA. The cleavage site is 10 nucleotides (nt) downstream of the target residue base-paired with the 5'-end of the guide DNA. The sequence is that of Protein argonaute from Thermus thermophilus (strain ATCC BAA-163 / DSM 7039 / HB27).